Here is a 141-residue protein sequence, read N- to C-terminus: Ribosome-binding factor A (141 aa).

This sequence belongs to the RbfA family. Monomer. Binds 30S ribosomal subunits, but not 50S ribosomal subunits or 70S ribosomes.

The protein resides in the cytoplasm. Its function is as follows. One of several proteins that assist in the late maturation steps of the functional core of the 30S ribosomal subunit. Associates with free 30S ribosomal subunits (but not with 30S subunits that are part of 70S ribosomes or polysomes). Required for efficient processing of 16S rRNA. May interact with the 5'-terminal helix region of 16S rRNA. This is Ribosome-binding factor A from Maricaulis maris (strain MCS10) (Caulobacter maris).